Here is a 332-residue protein sequence, read N- to C-terminus: Cytochrome c1, heme protein, mitochondrial (332 aa).

Residues 1-70 (MLARTCLRST…YYHLYGFASA (70 aa)) constitute a mitochondrion transit peptide. Topologically, residues 71 to 277 (MTPAEEGLHA…AEPEMDDRKR (207 aa)) are mitochondrial intermembrane. The Cytochrome c domain occupies 97 to 250 (QALRRGFQVY…GLVDYEDGTP (154 aa)). Heme c-binding residues include C110, C113, and H114. Residues 139 to 151 (EENEYDTEPNDQG) show a composition bias toward acidic residues. Residues 139-162 (EENEYDTEPNDQGEIEKRPGKLSD) form a disordered region. Heme c is bound at residue M234. The chain crosses the membrane as a helical span at residues 278–296 (MGMKVLVVTSVLFALSVYV). At 297 to 332 (KRYKWAWLKSRKIVYDPPKSPPPATNLALPQQRAKS) the chain is on the mitochondrial matrix side.

Belongs to the cytochrome c family. Component of the ubiquinol-cytochrome c oxidoreductase (cytochrome b-c1 complex, complex III, CIII), a multisubunit enzyme composed of 10 subunits. The complex is composed of 3 respiratory subunits cytochrome b (cob), cytochrome c1 (cyt-1) and Rieske protein (fes-1), 2 core protein subunits pep and ucr-1, and 5 low-molecular weight protein subunits qcr6, qcr7, qcr8, qcr9 and probably NCU16844/qcr10. The complex exists as an obligatory dimer and forms supercomplexes (SCs) in the inner mitochondrial membrane with NADH-ubiquinone oxidoreductase (complex I, CI) and cytochrome c oxidase (complex IV, CIV), resulting in different assemblies (supercomplexes SCI(1)III(2), SCIII(2)IV(1) and SCIII(2)IV(2) as well as higher order I(x)III(y)IV(z) megacomplexes). Heme c is required as a cofactor.

The protein localises to the mitochondrion inner membrane. It carries out the reaction a quinol + 2 Fe(III)-[cytochrome c](out) = a quinone + 2 Fe(II)-[cytochrome c](out) + 2 H(+)(out). Functionally, component of the ubiquinol-cytochrome c oxidoreductase, a multisubunit transmembrane complex that is part of the mitochondrial electron transport chain which drives oxidative phosphorylation. The respiratory chain contains 3 multisubunit complexes succinate dehydrogenase (complex II, CII), ubiquinol-cytochrome c oxidoreductase (cytochrome b-c1 complex, complex III, CIII) and cytochrome c oxidase (complex IV, CIV), that cooperate to transfer electrons derived from NADH and succinate to molecular oxygen, creating an electrochemical gradient over the inner membrane that drives transmembrane transport and the ATP synthase. The cytochrome b-c1 complex catalyzes electron transfer from ubiquinol to cytochrome c, linking this redox reaction to translocation of protons across the mitochondrial inner membrane, with protons being carried across the membrane as hydrogens on the quinol. In the process called Q cycle, 2 protons are consumed from the matrix, 4 protons are released into the intermembrane space and 2 electrons are passed to cytochrome c. Cytochrome c1 is a catalytic core subunit containing a c-type heme. It transfers electrons from the [2Fe-2S] iron-sulfur cluster of the Rieske protein to cytochrome c. This is Cytochrome c1, heme protein, mitochondrial (cyt-1) from Neurospora crassa (strain ATCC 24698 / 74-OR23-1A / CBS 708.71 / DSM 1257 / FGSC 987).